The primary structure comprises 169 residues: Ecotin (169 aa).

An N-terminal signal peptide occupies residues 1–21; it reads MKKCSIILASVLLATSINAIA. Residues Cys76 and Cys113 are joined by a disulfide bond.

The protein belongs to the protease inhibitor I11 (ecotin) family. Homodimer.

The protein localises to the periplasm. Functionally, general inhibitor of pancreatic serine proteases: inhibits chymotrypsin, trypsin, elastases, factor X, kallikrein as well as a variety of other proteases. This chain is Ecotin, found in Yersinia pseudotuberculosis serotype O:1b (strain IP 31758).